Reading from the N-terminus, the 197-residue chain is Adenylylsulfatase HINT3 (197 aa).

The disordered stretch occupies residues 14 to 43 (NPPGPNPTRDPTLRVSDCSSGSSGDGKVES). In terms of domain architecture, HIT spans 51-158 (VFCKIIRGES…IPRKERDCLW (108 aa)). Positions 143–147 (HTHIH) match the Histidine triad motif motif. The Tele-AMP-histidine intermediate role is filled by His-145. His-147 provides a ligand contact to substrate.

It localises to the peroxisome. The catalysed reaction is adenosine 5'-phosphosulfate + H2O = sulfate + AMP + 2 H(+). In terms of biological role, possesses adenylylsulfatase activity in vitro. In Arabidopsis thaliana (Mouse-ear cress), this protein is Adenylylsulfatase HINT3.